Reading from the N-terminus, the 222-residue chain is Glutathione S-transferase A2 (222 aa).

At A2 the chain carries N-acetylalanine. One can recognise a GST N-terminal domain in the interval G3–G83. K4 is subject to N6-succinyllysine. Glutathione contacts are provided by residues Y9, K45, Q54–V55, and Q67–T68. The GST C-terminal domain occupies D85–L208.

Belongs to the GST superfamily. Alpha family. Homodimer. Heterodimer of GSTA1 and GSTA2. Expressed in the kidney.

It carries out the reaction RX + glutathione = an S-substituted glutathione + a halide anion + H(+). Catalyzes the conjugation of glutathione to a large variety of electrophilic compounds. This Mus musculus (Mouse) protein is Glutathione S-transferase A2 (Gsta2).